A 349-amino-acid chain; its full sequence is Alpha-centractin (349 aa).

Methionine 1 is modified (N-acetylmethionine).

Belongs to the actin family. ARP1 subfamily. As to quaternary structure, part of the ACTR1A/ACTB filament around which the dynactin complex is built. The filament contains 8 copies of ACTR1A and 1 ACTB. Interacts with dynein and adapters such as BICD2. Interacts with BCCIP (isoform 2/alpha).

The protein localises to the cytoplasm. The protein resides in the cytoskeleton. It localises to the microtubule organizing center. It is found in the centrosome. Its subcellular location is the cell cortex. Functionally, part of the ACTR1A/ACTB filament around which the dynactin complex is built. The dynactin multiprotein complex activates the molecular motor dynein for ultra-processive transport along microtubules. The polypeptide is Alpha-centractin (ACTR1A) (Sus scrofa (Pig)).